The chain runs to 376 residues: Carbamoyl phosphate synthase small chain (376 aa).

The segment at 1-187 (MKALLVLEDG…AEDGSYAWRG (187 aa)) is CPSase. Residues serine 45, glycine 239, and glycine 241 each contribute to the L-glutamine site. The region spanning 191-376 (PLLVYDFGIK…RKIIGESAGA (186 aa)) is the Glutamine amidotransferase type-1 domain. Cysteine 266 acts as the Nucleophile in catalysis. Leucine 267, glutamine 270, asparagine 308, glycine 310, and phenylalanine 311 together coordinate L-glutamine. Catalysis depends on residues histidine 349 and glutamate 351.

It belongs to the CarA family. In terms of assembly, composed of two chains; the small (or glutamine) chain promotes the hydrolysis of glutamine to ammonia, which is used by the large (or ammonia) chain to synthesize carbamoyl phosphate. Tetramer of heterodimers (alpha,beta)4.

It carries out the reaction hydrogencarbonate + L-glutamine + 2 ATP + H2O = carbamoyl phosphate + L-glutamate + 2 ADP + phosphate + 2 H(+). It catalyses the reaction L-glutamine + H2O = L-glutamate + NH4(+). It functions in the pathway amino-acid biosynthesis; L-arginine biosynthesis; carbamoyl phosphate from bicarbonate: step 1/1. Its pathway is pyrimidine metabolism; UMP biosynthesis via de novo pathway; (S)-dihydroorotate from bicarbonate: step 1/3. Its function is as follows. Small subunit of the glutamine-dependent carbamoyl phosphate synthetase (CPSase). CPSase catalyzes the formation of carbamoyl phosphate from the ammonia moiety of glutamine, carbonate, and phosphate donated by ATP, constituting the first step of 2 biosynthetic pathways, one leading to arginine and/or urea and the other to pyrimidine nucleotides. The small subunit (glutamine amidotransferase) binds and cleaves glutamine to supply the large subunit with the substrate ammonia. This Desulfovibrio desulfuricans (strain ATCC 27774 / DSM 6949 / MB) protein is Carbamoyl phosphate synthase small chain.